A 126-amino-acid polypeptide reads, in one-letter code: Profilin (126 aa).

The protein belongs to the profilin family. Occurs in many kinds of cells as a complex with monomeric actin in a 1:1 ratio.

It is found in the cytoplasm. The protein localises to the cytoskeleton. Its function is as follows. Binds to actin and affects the structure of the cytoskeleton. At high concentrations, profilin prevents the polymerization of actin, whereas it enhances it at low concentrations. By binding to PIP2, it inhibits the formation of IP3 and DG. The protein is Profilin of Branchiostoma belcheri (Amphioxus).